The primary structure comprises 292 residues: RNA-binding P34 protein (292 aa).

The helical transmembrane segment at 29-46 threads the bilayer; that stretch reads CAIYTVACRILFLSVGFM. Residues 219–292 are RNA-binding; that stretch reads EGFKSPQVEY…NFKAKNKNNE (74 aa).

The protein resides in the host endoplasmic reticulum membrane. Its function is as follows. Acts as a ssRNA-binding protein that may be involved in targeting RNA2 to replication sites or facilitating RNA2 replication. In Lettuce infectious yellows virus (isolate United States/92) (LIYV), this protein is RNA-binding P34 protein.